The sequence spans 173 residues: Interferon gamma (173 aa).

The first 22 residues, 1–22 (MNATHCILALQLCLLAISGCSS), serve as a signal peptide directing secretion. Glutamine 23 bears the Pyrrolidone carboxylic acid mark. Asparagine 38 and asparagine 105 each carry an N-linked (GlcNAc...) asparagine glycan.

Belongs to the type II (or gamma) interferon family. Homodimer. Interacts with IFNGR1 (via extracellular domain); this interaction promotes IFNGR1 dimerization. In terms of tissue distribution, released primarily from activated T lymphocytes.

The protein resides in the secreted. Functionally, type II interferon produced by immune cells such as T-cells and NK cells that plays crucial roles in antimicrobial, antiviral, and antitumor responses by activating effector immune cells and enhancing antigen presentation. Primarily signals through the JAK-STAT pathway after interaction with its receptor IFNGR1 to affect gene regulation. Upon IFNG binding, IFNGR1 intracellular domain opens out to allow association of downstream signaling components JAK2, JAK1 and STAT1, leading to STAT1 activation, nuclear translocation and transcription of IFNG-regulated genes. Many of the induced genes are transcription factors such as IRF1 that are able to further drive regulation of a next wave of transcription. Plays a role in class I antigen presentation pathway by inducing a replacement of catalytic proteasome subunits with immunoproteasome subunits. In turn, increases the quantity, quality, and repertoire of peptides for class I MHC loading. Increases the efficiency of peptide generation also by inducing the expression of activator PA28 that associates with the proteasome and alters its proteolytic cleavage preference. Up-regulates as well MHC II complexes on the cell surface by promoting expression of several key molecules such as cathepsins B/CTSB, H/CTSH, and L/CTSL. Participates in the regulation of hematopoietic stem cells during development and under homeostatic conditions by affecting their development, quiescence, and differentiation. The protein is Interferon gamma (IFNG) of Meriones unguiculatus (Mongolian jird).